The primary structure comprises 547 residues: MENAKDFIGETIKENGLLTIEDDGSSSSDEEATLKRRLAGPSVLKSGQENVNQKKINEIIYEASKGSKFFEAEQKRDRELRLRIEKVQVEVEKYQSKLRFDKAFQREWTIRQESVDTTVEDFRAKRDLTQIIVHVDCDAFYASIEELKNPKLKSLPMAVGKSVLCTANYVARKFGVRSAMPEFIARKICPDLVVIPLNLSEYAIKSKEIQNVLAQYDSNLCPASIDEFYMNLTSHLRLQELAFTVENITMVVEKIRKQVHEETGVTVSCGIAANKLLAKIASNKRKPNNQFFIPFDEIGISKFMNDLPVREVSGIGRVLEQQLLGLEIKTCGDIQRNLVILSYIFLPKSFQNLLRCSYGFGTTILDEYGESKRKTIGSEATFSSNLSSPSIIEYKLRLLVQNVSENLQKRGLVTNSIAIKYKTSEFQVHTKQKSIGQFIHSESDLLKPALQLLRQSYPMTIRLLGVRATKLVSKSRCLAMQLKFQSQNTVPCPVCQKNIENELGILNQHVDLCLNVETVKSLINTDHTANPTIKKRKSNTLDTYFLE.

The interval 18–39 (LTIEDDGSSSSDEEATLKRRLA) is disordered. Residues 20–31 (IEDDGSSSSDEE) are compositionally biased toward acidic residues. The UmuC domain maps to 132 to 316 (IVHVDCDAFY…LPVREVSGIG (185 aa)). Mg(2+)-binding residues include Asp-136 and Asp-226. The segment at 489-518 (TVPCPVCQKNIENELGILNQHVDLCLNVET) adopts a UBZ4-type zinc-finger fold. Residues Cys-492, Cys-495, His-509, and Cys-513 each contribute to the Zn(2+) site.

As to quaternary structure, interacts with hus1 and rad17.

The protein localises to the cytoplasm. Its subcellular location is the nucleus. The catalysed reaction is DNA(n) + a 2'-deoxyribonucleoside 5'-triphosphate = DNA(n+1) + diphosphate. Its function is as follows. DNA polymerase specifically involved in DNA repair. Plays an important role in translesion synthesis, where the normal high-fidelity DNA polymerases cannot proceed and DNA synthesis stalls. Has a role in meiosis. This chain is DNA polymerase kappa (mug40), found in Schizosaccharomyces pombe (strain 972 / ATCC 24843) (Fission yeast).